Reading from the N-terminus, the 600-residue chain is Epidermal growth factor receptor kinase substrate 8-like protein 3 (600 aa).

In terms of domain architecture, PTB spans 28 to 155 (QHRVEHLMTC…ALEEELEERP (128 aa)). 2 disordered regions span residues 152–245 (EERP…PERD) and 429–452 (LHFP…PLSS). Residues 204–214 (SERSISPSSRS) are compositionally biased toward low complexity. Phosphoserine is present on Ser238. Residues 457-516 (RAALKMQVLYEFEARNAQELTVAQGEILEVLDQSKRWWLVKNEAGLTGYIPSNILEPLPA) enclose the SH3 domain.

This sequence belongs to the EPS8 family. As to quaternary structure, interacts with ABI1. Part of a complex that contains SOS1, ABI1 and EPS8L2. Interacts with FASLG. As to expression, detected in embryonic gut. Detected in adult testis, placenta, adrenal gland and intestine.

The protein resides in the cytoplasm. This Mus musculus (Mouse) protein is Epidermal growth factor receptor kinase substrate 8-like protein 3 (Eps8l3).